A 1607-amino-acid polypeptide reads, in one-letter code: Dicer-like protein 1 (1607 aa).

The segment at 1-74 (MNAEMREGSS…PDTKKWIVND (74 aa)) is disordered. The Helicase ATP-binding domain occupies 142–324 (LFERAKTQNT…IARSPELEGL (183 aa)). Residue 155–162 (LDTGSGKT) participates in ATP binding. The DEAH box motif lies at 267–270 (DEAH). The Helicase C-terminal domain maps to 461–632 (KVVILLRILR…EALPADRKLT (172 aa)). A Dicer dsRNA-binding fold domain is found at 665–755 (SLICLAAFVA…RPTFTKQLPA (91 aa)). A PAZ domain is found at 905 to 1040 (GAVTFVRDNE…IVLEPLRISP (136 aa)). RNase III domains are found at residues 1063–1219 (LVAL…LTAQ) and 1272–1447 (AARF…VDSR). Glu1312, Asp1433, and Glu1436 together coordinate Mg(2+). The region spanning 1478 to 1556 (HPVTFLAGIM…AKKAIQVLEG (79 aa)) is the DRBM domain. 4 residues coordinate Zn(2+): Cys1493, His1527, Cys1568, and Cys1570.

It belongs to the helicase family. Dicer subfamily. Mg(2+) is required as a cofactor. Requires Mn(2+) as cofactor.

In terms of biological role, dicer-like endonuclease involved in cleaving double-stranded RNA in the RNA interference (RNAi) pathway. Produces 21 to 25 bp dsRNAs (siRNAs) which target the selective destruction of homologous RNAs leading to sequence-specific suppression of gene expression, called post-transcriptional gene silencing (PTGS). Part of a broad host defense response against viral infection and transposons. The chain is Dicer-like protein 1 (DCL1) from Chaetomium globosum (strain ATCC 6205 / CBS 148.51 / DSM 1962 / NBRC 6347 / NRRL 1970) (Soil fungus).